A 239-amino-acid polypeptide reads, in one-letter code: Methylthioribulose-1-phosphate dehydratase (239 aa).

A substrate-binding site is contributed by Cys94. His112 and His114 together coordinate Zn(2+). Glu136 functions as the Proton donor/acceptor in the catalytic mechanism. His192 is a Zn(2+) binding site.

Belongs to the aldolase class II family. MtnB subfamily. Requires Zn(2+) as cofactor.

Its subcellular location is the cytoplasm. It carries out the reaction 5-(methylsulfanyl)-D-ribulose 1-phosphate = 5-methylsulfanyl-2,3-dioxopentyl phosphate + H2O. Its pathway is amino-acid biosynthesis; L-methionine biosynthesis via salvage pathway; L-methionine from S-methyl-5-thio-alpha-D-ribose 1-phosphate: step 2/6. Its function is as follows. Catalyzes the dehydration of methylthioribulose-1-phosphate (MTRu-1-P) into 2,3-diketo-5-methylthiopentyl-1-phosphate (DK-MTP-1-P). Functions in the methionine salvage pathway. May play a role in apoptosis. The sequence is that of Methylthioribulose-1-phosphate dehydratase from Aquarana catesbeiana (American bullfrog).